The chain runs to 508 residues: Lysine--tRNA ligase (508 aa).

Mg(2+)-binding residues include E418 and E425.

It belongs to the class-II aminoacyl-tRNA synthetase family. As to quaternary structure, homodimer. It depends on Mg(2+) as a cofactor.

It is found in the cytoplasm. It carries out the reaction tRNA(Lys) + L-lysine + ATP = L-lysyl-tRNA(Lys) + AMP + diphosphate. This Burkholderia ambifaria (strain MC40-6) protein is Lysine--tRNA ligase.